The chain runs to 360 residues: Isopentenyl-diphosphate delta-isomerase (360 aa).

6–7 provides a ligand contact to substrate; the sequence is RK. FMN-binding positions include T62, 63–65, S93, and N122; that span reads GMT. 93–95 provides a ligand contact to substrate; that stretch reads SQR. Q157 is a substrate binding site. Residue E158 coordinates Mg(2+). Residues K189, S214, T219, 272 to 274, and 293 to 294 contribute to the FMN site; these read GIR and AL.

This sequence belongs to the IPP isomerase type 2 family. As to quaternary structure, homooctamer. Dimer of tetramers. FMN serves as cofactor. Requires NADPH as cofactor. It depends on Mg(2+) as a cofactor.

The protein resides in the cytoplasm. The catalysed reaction is isopentenyl diphosphate = dimethylallyl diphosphate. Functionally, involved in the biosynthesis of isoprenoids. Catalyzes the 1,3-allylic rearrangement of the homoallylic substrate isopentenyl (IPP) to its allylic isomer, dimethylallyl diphosphate (DMAPP). This is Isopentenyl-diphosphate delta-isomerase from Ignicoccus hospitalis (strain KIN4/I / DSM 18386 / JCM 14125).